The sequence spans 117 residues: Large ribosomal subunit protein bL19 (117 aa).

Belongs to the bacterial ribosomal protein bL19 family.

This protein is located at the 30S-50S ribosomal subunit interface and may play a role in the structure and function of the aminoacyl-tRNA binding site. This Vesicomyosocius okutanii subsp. Calyptogena okutanii (strain HA) protein is Large ribosomal subunit protein bL19.